A 490-amino-acid chain; its full sequence is ATP synthase subunit beta, plastid (490 aa).

170 to 177 serves as a coordination point for ATP; that stretch reads GGAGVGKT.

The protein belongs to the ATPase alpha/beta chains family. As to quaternary structure, F-type ATPases have 2 components, CF(1) - the catalytic core - and CF(0) - the membrane proton channel. CF(1) has five subunits: alpha(3), beta(3), gamma(1), delta(1), epsilon(1). CF(0) has four main subunits: a(1), b(1), b'(1) and c(9-12).

It is found in the plastid membrane. The catalysed reaction is ATP + H2O + 4 H(+)(in) = ADP + phosphate + 5 H(+)(out). Produces ATP from ADP in the presence of a proton gradient across the membrane. The catalytic sites are hosted primarily by the beta subunits. This Cuscuta japonica (Japanese dodder) protein is ATP synthase subunit beta, plastid (atpB).